The chain runs to 288 residues: Shikimate dehydrogenase (NADP(+)) (288 aa).

Shikimate contacts are provided by residues 21–23 (SLS) and Thr68. Lys72 (proton acceptor) is an active-site residue. Glu84 contributes to the NADP(+) binding site. Positions 93 and 108 each coordinate shikimate. NADP(+) contacts are provided by residues 132–136 (GNGGA) and Leu230. Tyr232 is a binding site for shikimate. Gly253 is an NADP(+) binding site.

It belongs to the shikimate dehydrogenase family. As to quaternary structure, homodimer.

It catalyses the reaction shikimate + NADP(+) = 3-dehydroshikimate + NADPH + H(+). Its pathway is metabolic intermediate biosynthesis; chorismate biosynthesis; chorismate from D-erythrose 4-phosphate and phosphoenolpyruvate: step 4/7. Involved in the biosynthesis of the chorismate, which leads to the biosynthesis of aromatic amino acids. Catalyzes the reversible NADPH linked reduction of 3-dehydroshikimate (DHSA) to yield shikimate (SA). In Gloeothece citriformis (strain PCC 7424) (Cyanothece sp. (strain PCC 7424)), this protein is Shikimate dehydrogenase (NADP(+)).